A 348-amino-acid polypeptide reads, in one-letter code: Cell surface glycoprotein CD200 receptor 1 (348 aa).

The signal sequence occupies residues 1-24; it reads MLCPWRTANLGLLLILTIFLVAEA. The Extracellular portion of the chain corresponds to 29 to 265; it reads QPNNSLMLQT…PVPGAKKSAK (237 aa). Residues asparagine 31, asparagine 60, asparagine 69, asparagine 116, asparagine 122, asparagine 185, asparagine 218, asparagine 233, and asparagine 247 are each glycosylated (N-linked (GlcNAc...) asparagine). 2 cysteine pairs are disulfide-bonded: cysteine 83–cysteine 155 and cysteine 107–cysteine 123. One can recognise an Ig-like C2-type domain in the interval 160-251; the sequence is PDGNFHRGYH…SHLTGNKSLY (92 aa). Intrachain disulfides connect cysteine 190/cysteine 239 and cysteine 209/cysteine 227. The helical transmembrane segment at 266–286 threads the bilayer; that stretch reads LYIPYIILTIIILTIVGFIWL. Topologically, residues 287-348 are cytoplasmic; it reads LKVNGCRKYK…SEVDTDLHTL (62 aa).

The protein belongs to the CD200R family. In terms of assembly, CD200 and CD200R1 interact via their respective N-terminal Ig-like domains. Interacts with Human herpesvirus 8 vOX2 protein. As to quaternary structure, (Microbial infection) Interacts with human herpesvirus 8/HHV-8 protein vOX2/K14. In terms of tissue distribution, expressed in granulocytes, monocytes, most T-cells, neutrophils, basophils and a subset of NK, NKT and B-cells (at protein level). Expressed in bone marrow, lymph nodes, spleen, lung, liver, spinal cord, kidney. Expressed in monocyte-derived dendritic and mast cells.

The protein resides in the cell membrane. The protein localises to the secreted. Inhibitory receptor for the CD200/OX2 cell surface glycoprotein. Limits inflammation by inhibiting the expression of pro-inflammatory molecules including TNF-alpha, interferons, and inducible nitric oxide synthase (iNOS) in response to selected stimuli. Also binds to HHV-8 K14 viral CD200 homolog with identical affinity and kinetics as the host CD200. This Homo sapiens (Human) protein is Cell surface glycoprotein CD200 receptor 1 (CD200R1).